We begin with the raw amino-acid sequence, 80 residues long: MSNKGQLLQDPFLNLLRKEHVPVSIYLVNGIKLQGHIESFDQYVVLLRNTVTQMVYKHAISTVVPGRPVNFHATEAQDSN.

In terms of domain architecture, Sm spans 10 to 69 (DPFLNLLRKEHVPVSIYLVNGIKLQGHIESFDQYVVLLRNTVTQMVYKHAISTVVPGRPV).

Belongs to the Hfq family. Homohexamer.

RNA chaperone that binds small regulatory RNA (sRNAs) and mRNAs to facilitate mRNA translational regulation in response to envelope stress, environmental stress and changes in metabolite concentrations. Also binds with high specificity to tRNAs. The protein is RNA-binding protein Hfq of Leptothrix cholodnii (strain ATCC 51168 / LMG 8142 / SP-6) (Leptothrix discophora (strain SP-6)).